The primary structure comprises 831 residues: Zinc transporter ZIP10 (831 aa).

The signal sequence occupies residues 1–25; sequence MKVHMHTKFCLICLLTFIFHHCNHC. A disordered region spans residues 126-318; sequence HNHQHSHNHL…RKREAPHVKN (193 aa). Over residues 138–147 the composition is skewed to polar residues; sequence ENQTVTSVST. N-linked (GlcNAc...) asparagine glycosylation is present at Asn-139. Over residues 152 to 171 the composition is skewed to basic and acidic residues; that stretch reads KCDPEKETVEVSVKSDDKHM. Basic residues predominate over residues 172–188; that stretch reads HDHNHRLRHHHRLHHHL. A compositionally biased stretch (basic and acidic residues) spans 189 to 198; it reads DHNNTHHFHN. Asn-198 and Asn-218 each carry an N-linked (GlcNAc...) asparagine glycan. Positions 211–221 are enriched in polar residues; it reads NEPSTETNKTQ. The segment covering 229 to 238 has biased composition (basic residues); the sequence is PKGKRKKKGR. Basic and acidic residues-rich tracts occupy residues 256-273 and 281-315; these read DQGE…DRVH and HLPE…EAPH. Asn-339 is a glycosylation site (N-linked (GlcNAc...) asparagine). 2 consecutive transmembrane segments (helical) span residues 411 to 431 and 438 to 458; these read IISI…VPII and FLLT…ALLH. The segment at 464 to 484 is disordered; the sequence is QGGHDHSHQHAHGHGHSHGHE. Residues 495–515 form a helical membrane-spanning segment; it reads VLKGLVALGGIYLLFIIEHCI. Residues Thr-536 and Thr-553 each carry the phosphothreonine modification. The residue at position 591 (Ser-591) is a Phosphoserine. A run of 4 helical transmembrane segments spans residues 687–707, 732–752, 759–779, and 801–821; these read AIGA…IAVF, IVYN…GTAV, ITLW…LVDM, and FILQ…IALY.

Belongs to the ZIP transporter (TC 2.A.5) family. As to quaternary structure, interacts with SLC39A6; which triggers cells to undergo EMT and mitosis. Found in a complex with SLC39A6, SLC39A10 and with the 'Ser-727' phosphorylated form of STAT3 throughout mitosis. Found in a complex with SLC39A6, SLC39A10 and with NCAM1; this complex controls NCAM1 phosphorylation and integration into focal adhesion complexes during epithelial-tomesenchymal transition. Found in a complex with SLC39A6, SLC39A10 and with GSK3B that controls NCAM1 phosphorylation. Post-translationally, undergoes N-terminal ectodomain shedding.

The protein localises to the cell membrane. The protein resides in the apical cell membrane. The enzyme catalyses Zn(2+)(in) = Zn(2+)(out). Its function is as follows. Zinc-influx transporter. When associated with SLC39A6, the heterodimer formed by SLC39A10 and SLC39A6 mediates cellular zinc uptake to trigger cells to undergo epithelial-to-mesenchymal transition (EMT). SLC39A10-SLC39A6 heterodimers play also an essentiel role in initiating mitosis by importing zinc into cells to initiate a pathway resulting in the onset of mitosis. Plays an important for both mature B-cell maintenance and humoral immune responses. When associated with SLC39A10, the heterodimer controls NCAM1 phosphorylation and integration into focal adhesion complexes during EMT. This is Zinc transporter ZIP10 from Homo sapiens (Human).